A 404-amino-acid polypeptide reads, in one-letter code: GTPase Obg (404 aa).

In terms of domain architecture, Obg spans 1-159 (MKFIDEARIE…RALRLELKVL (159 aa)). The tract at residues 22–43 (SFRREKFIPRGGPDGGDGGRGG) is disordered. The segment covering 33 to 43 (GPDGGDGGRGG) has biased composition (gly residues). Residues 160 to 334 (ADVGLLGMPN…LVFAIQDFLD (175 aa)) form the OBG-type G domain. Residues 166-173 (GMPNAGKS), 191-195 (FTTLA), 213-216 (DIPG), 284-287 (NKLD), and 315-317 (SAL) each bind GTP. Mg(2+) contacts are provided by Ser173 and Thr193. The segment at 373–404 (LLAEGETGTGDDGRDGNENDPADEQDTNRPNH) is disordered.

This sequence belongs to the TRAFAC class OBG-HflX-like GTPase superfamily. OBG GTPase family. In terms of assembly, monomer. Mg(2+) serves as cofactor.

Its subcellular location is the cytoplasm. Its function is as follows. An essential GTPase which binds GTP, GDP and possibly (p)ppGpp with moderate affinity, with high nucleotide exchange rates and a fairly low GTP hydrolysis rate. Plays a role in control of the cell cycle, stress response, ribosome biogenesis and in those bacteria that undergo differentiation, in morphogenesis control. In Aromatoleum aromaticum (strain DSM 19018 / LMG 30748 / EbN1) (Azoarcus sp. (strain EbN1)), this protein is GTPase Obg.